Consider the following 366-residue polypeptide: Lysophosphatidic acid receptor 1-A (366 aa).

The Extracellular portion of the chain corresponds to methionine 1–lysine 52. Intrachain disulfides connect cysteine 26-cysteine 192 and cysteine 190-cysteine 197. N-linked (GlcNAc...) asparagine glycans are attached at residues asparagine 29 and asparagine 37. Lysine 41 provides a ligand contact to a 1-acyl-sn-glycero-3-phosphate. Residues leucine 53 to tyrosine 77 traverse the membrane as a helical segment. The Cytoplasmic segment spans residues valine 78–proline 85. Residues isoleucine 86 to phenylalanine 109 traverse the membrane as a helical segment. The Extracellular segment spans residues asparagine 110 to tryptophan 123. The helical transmembrane segment at leucine 124–isoleucine 146 threads the bilayer. Residue arginine 126–aspartate 131 coordinates a 1-acyl-sn-glycero-3-phosphate. The Cytoplasmic segment spans residues glutamate 147–arginine 165. A helical membrane pass occupies residues valine 166–valine 186. The Extracellular portion of the chain corresponds to glycine 187–aspartate 206. The chain crosses the membrane as a helical span at residues serine 207–tyrosine 227. Position 212 (tryptophan 212) interacts with a 1-acyl-sn-glycero-3-phosphate. Residues alanine 228 to serine 257 lie on the Cytoplasmic side of the membrane. The helical transmembrane segment at leucine 258–leucine 282 threads the bilayer. Over aspartate 283–lysine 296 the chain is Extracellular. Residues cysteine 286 and cysteine 289 are joined by a disulfide bond. A helical transmembrane segment spans residues phenylalanine 297–aspartate 317. Residues lysine 318 to valine 366 lie on the Cytoplasmic side of the membrane.

Belongs to the G-protein coupled receptor 1 family. Expressed at high levels in oocytes and at lower levels in brain and spinal cord. Below detection level in lung, heart, kidney, liver, muscle, stomach, and intestine.

The protein resides in the cell surface. Its subcellular location is the cell membrane. The protein localises to the endosome. In terms of biological role, receptor for lysophosphatidic acid (LPA). Plays a role in the reorganization of the actin cytoskeleton, cell migration, differentiation and proliferation, and thereby contributes to the responses to tissue damage and infectious agents. Activates downstream signaling cascades via the G(i)/G(o), G(12)/G(13), and G(q) families of heteromeric G proteins. Signaling inhibits adenylyl cyclase activity and decreases cellular cAMP levels. Signaling triggers an increase of cytoplasmic Ca(2+) levels. Signaling leads to the activation of phospholipase C (PLC) and the formation of inositol 1,4,5-trisphosphate. Signaling mediates activation of down-stream MAP kinases. Contributes to the regulation of cell shape. Promotes Rho-dependent reorganization of the actin cytoskeleton in neuronal cells and neurite retraction. Promotes the activation of Rho and the formation of actin stress fibers. Promotes formation of lamellipodia at the leading edge of migrating cells via activation of Rac. Through its function as lysophosphatidic acid receptor, plays a role in chemotaxis and cell migration, including responses to injury and wounding. Promotes cell proliferation in response to lysophosphatidic acid. This is Lysophosphatidic acid receptor 1-A (lpar1-a) from Xenopus laevis (African clawed frog).